We begin with the raw amino-acid sequence, 130 residues long: Trypsin inhibitor (130 aa).

A disordered region spans residues 27–49; that stretch reads LHKQARQSGSGPSPQGPQQRPPL. The span at 32–49 shows a compositional bias: low complexity; the sequence is RQSGSGPSPQGPQQRPPL.

The protein belongs to the 2S seed storage albumins family. The protein consists of two chains linked by disulfide bonds.

Inhibits trypsin with a Ki of 7 x 10(-6) M. This is Trypsin inhibitor from Mutarda arvensis (Charlock mustard).